The following is a 289-amino-acid chain: BTB/POZ domain-containing protein KCTD7 (289 aa).

The interval 1 to 35 (MVVVTGREPDSRRQDGAMSSSDAEDDFLEPATPTA) is disordered. The region spanning 51–149 (EVVPLNIGGA…QLENMQPLKG (99 aa)) is the BTB domain.

As to quaternary structure, interacts with CUL3.

The protein localises to the cell membrane. It is found in the cytoplasm. The protein resides in the cytosol. Its function is as follows. May be involved in the control of excitability of cortical neurons. This chain is BTB/POZ domain-containing protein KCTD7 (KCTD7), found in Homo sapiens (Human).